The following is a 455-amino-acid chain: Probable glycine dehydrogenase (decarboxylating) subunit 1 (455 aa).

The protein belongs to the GcvP family. N-terminal subunit subfamily. As to quaternary structure, the glycine cleavage system is composed of four proteins: P, T, L and H. In this organism, the P 'protein' is a heterodimer of two subunits.

It catalyses the reaction N(6)-[(R)-lipoyl]-L-lysyl-[glycine-cleavage complex H protein] + glycine + H(+) = N(6)-[(R)-S(8)-aminomethyldihydrolipoyl]-L-lysyl-[glycine-cleavage complex H protein] + CO2. In terms of biological role, the glycine cleavage system catalyzes the degradation of glycine. The P protein binds the alpha-amino group of glycine through its pyridoxal phosphate cofactor; CO(2) is released and the remaining methylamine moiety is then transferred to the lipoamide cofactor of the H protein. This chain is Probable glycine dehydrogenase (decarboxylating) subunit 1, found in Francisella tularensis subsp. holarctica (strain FTNF002-00 / FTA).